The following is a 349-amino-acid chain: Deoxyguanosinetriphosphate triphosphohydrolase-like protein (349 aa).

One can recognise an HD domain in the interval 80-197; that stretch reads RLTHTLEVAQ…VKYSDKIAYV (118 aa).

Belongs to the dGTPase family. Type 2 subfamily.

The chain is Deoxyguanosinetriphosphate triphosphohydrolase-like protein from Clostridium tetani (strain Massachusetts / E88).